A 220-amino-acid polypeptide reads, in one-letter code: NAD(P)H-quinone oxidoreductase subunit M, chloroplastic (220 aa).

The transit peptide at 1–37 directs the protein to the chloroplast; the sequence is MATTASPFLSPAKLSLERRLPRATWTARRSVRFPPVR. Residues 20 to 91 are disordered; that stretch reads LPRATWTARR…PVQPLAESKN (72 aa). The span at 34-44 shows a compositional bias: low complexity; the sequence is PPVRAQDQQQQ.

It belongs to the NDH complex subunit M family. In terms of assembly, part of the chloroplast NDH complex, composed of a mixture of chloroplast and nucleus encoded subunits. Component of the NDH subcomplex A, at least composed of ndhH, ndhI, ndhJ, ndhK, ndhL, ndhM, ndhN and ndhO.

It localises to the plastid. The protein resides in the chloroplast thylakoid membrane. It carries out the reaction a plastoquinone + NADH + (n+1) H(+)(in) = a plastoquinol + NAD(+) + n H(+)(out). It catalyses the reaction a plastoquinone + NADPH + (n+1) H(+)(in) = a plastoquinol + NADP(+) + n H(+)(out). Its function is as follows. NDH shuttles electrons from NAD(P)H:plastoquinone, via FMN and iron-sulfur (Fe-S) centers, to quinones in the photosynthetic chain and possibly in a chloroplast respiratory chain. The immediate electron acceptor for the enzyme in this species is believed to be plastoquinone. Couples the redox reaction to proton translocation, and thus conserves the redox energy in a proton gradient. The protein is NAD(P)H-quinone oxidoreductase subunit M, chloroplastic of Oryza sativa subsp. indica (Rice).